A 303-amino-acid chain; its full sequence is Succinate--CoA ligase [ADP-forming] subunit alpha (303 aa).

Residues 20–23 (TGSE), K46, and 108–110 (ITE) each bind CoA. Residue Y173 coordinates substrate. The active-site Tele-phosphohistidine intermediate is H259.

This sequence belongs to the succinate/malate CoA ligase alpha subunit family. Heterotetramer of two alpha and two beta subunits.

It catalyses the reaction succinate + ATP + CoA = succinyl-CoA + ADP + phosphate. The enzyme catalyses GTP + succinate + CoA = succinyl-CoA + GDP + phosphate. It participates in carbohydrate metabolism; tricarboxylic acid cycle; succinate from succinyl-CoA (ligase route): step 1/1. In terms of biological role, succinyl-CoA synthetase functions in the citric acid cycle (TCA), coupling the hydrolysis of succinyl-CoA to the synthesis of either ATP or GTP and thus represents the only step of substrate-level phosphorylation in the TCA. The alpha subunit of the enzyme binds the substrates coenzyme A and phosphate, while succinate binding and nucleotide specificity is provided by the beta subunit. The chain is Succinate--CoA ligase [ADP-forming] subunit alpha from Mycobacterium tuberculosis (strain CDC 1551 / Oshkosh).